The primary structure comprises 106 residues: Small ribosomal subunit protein uS10 (106 aa).

It belongs to the universal ribosomal protein uS10 family. As to quaternary structure, part of the 30S ribosomal subunit.

Functionally, involved in the binding of tRNA to the ribosomes. This is Small ribosomal subunit protein uS10 from Prochlorococcus marinus (strain MIT 9515).